Reading from the N-terminus, the 165-residue chain is MRAIYITGYMGAGKTTIGKALSKELGIDVIDTDQKIEEKQGRVIRDIFAKEGERSFRQYESEMLCSLPTKDVIITTGGGIVERIENREWMKENGTVVYLYCDPYVIADRLHEDITRPLFQKENVEAFVAKFEERRAFYEEAVIQIDTTNKSIQEVTEEILRRINS.

An ATP-binding site is contributed by 11–16 (GAGKTT). Residue threonine 15 participates in Mg(2+) binding. Residues aspartate 33, arginine 57, and glycine 78 each coordinate substrate. Arginine 116 contacts ATP. Arginine 134 contacts substrate.

This sequence belongs to the shikimate kinase family. In terms of assembly, monomer. Mg(2+) serves as cofactor.

The protein localises to the cytoplasm. It catalyses the reaction shikimate + ATP = 3-phosphoshikimate + ADP + H(+). It participates in metabolic intermediate biosynthesis; chorismate biosynthesis; chorismate from D-erythrose 4-phosphate and phosphoenolpyruvate: step 5/7. Its function is as follows. Catalyzes the specific phosphorylation of the 3-hydroxyl group of shikimic acid using ATP as a cosubstrate. The chain is Shikimate kinase from Bacillus cytotoxicus (strain DSM 22905 / CIP 110041 / 391-98 / NVH 391-98).